Consider the following 839-residue polypeptide: MDVSLCPAKCSFWRIFLLGSVWLDYVGSVLACPANCVCSKTEINCRRPDDGNLFPLLEGQDSGNSNGNASINITDISRNITSIHIENWRSLHTLNAVDMELYTGLQKLTIKNSGLRSIQPRAFAKNPHLRYINLSSNRLTTLSWQLFQTLSLRELQLEQNFFNCSCDIRWMQLWQEQGEAKLNSQNLYCINADGSQLPLFRMNISQCDLPEISVSHVNLTVREGDNAVITCNGSGSPLPDVDWIVTGLQSINTHQTNLNWTNVHAINLTLVNVTSEDNGFTLTCIAENVVGMSNASVALTVYYPPRVVSLEEPELRLEHCIEFVVRGNPPPTLHWLHNGQPLRESKIIHVEYYQEGEISEGCLLFNKPTHYNNGNYTLIAKNPLGTANQTINGHFLKEPFPESTDNFILFDEVSPTPPITVTHKPEEDTFGVSIAVGLAAFACVLLVVLFVMINKYGRRSKFGMKGPVAVISGEEDSASPLHHINHGITTPSSLDAGPDTVVIGMTRIPVIENPQYFRQGHNCHKPDTYVQHIKRRDIVLKRELGEGAFGKVFLAECYNLSPTKDKMLVAVKALKDPTLAARKDFQREAELLTNLQHEHIVKFYGVCGDGDPLIMVFEYMKHGDLNKFLRAHGPDAMILVDGQPRQAKGELGLSQMLHIASQIASGMVYLASQHFVHRDLATRNCLVGANLLVKIGDFGMSRDVYSTDYYRLFNPSGNDFCIWCEVGGHTMLPIRWMPPESIMYRKFTTESDVWSFGVILWEIFTYGKQPWFQLSNTEVIECITQGRVLERPRVCPKEVYDVMLGCWQREPQQRLNIKEIYKILHALGKATPIYLDILG.

The signal sequence occupies residues 1-31; sequence MDVSLCPAKCSFWRIFLLGSVWLDYVGSVLA. Intrachain disulfides connect Cys32–Cys38 and Cys36–Cys45. Over 32-429 the chain is Extracellular; that stretch reads CPANCVCSKT…TVTHKPEEDT (398 aa). N-linked (GlcNAc...) asparagine glycans are attached at residues Asn72 and Asn79. LRR repeat units lie at residues 104–125 and 128–149; these read GLQK…AFAK and HLRY…LFQT. 2 N-linked (GlcNAc...) asparagine glycosylation sites follow: Asn133 and Asn163. In terms of domain architecture, LRRCT spans 160-209; sequence NFFNCSCDIRWMQLWQEQGEAKLNSQNLYCINADGSQLPLFRMNISQCDL. 2 disulfide bridges follow: Cys164–Cys189 and Cys166–Cys207. Residues Asn203, Asn218, Asn232, Asn259, Asn267, Asn272, and Asn294 are each glycosylated (N-linked (GlcNAc...) asparagine). Ig-like C2-type domains follow at residues 210 to 300 and 309 to 382; these read PEIS…VALT and SLEE…IAKN. Residues Cys231 and Cys284 are joined by a disulfide bond. Cys320 and Cys362 are disulfide-bonded. Asn375 and Asn388 each carry an N-linked (GlcNAc...) asparagine glycan. A helical transmembrane segment spans residues 430 to 453; it reads FGVSIAVGLAAFACVLLVVLFVMI. Topologically, residues 454–839 are cytoplasmic; sequence NKYGRRSKFG…ATPIYLDILG (386 aa). Ser493 is modified (phosphoserine). Tyr516 carries the phosphotyrosine; by autocatalysis modification. Residues 538–839 enclose the Protein kinase domain; it reads IVLKRELGEG…ATPIYLDILG (302 aa). ATP contacts are provided by residues 544-552 and Lys572; that span reads LGEGAFGKV. Asp679 serves as the catalytic Proton acceptor. Tyr705, Tyr709, and Tyr710 each carry phosphotyrosine; by autocatalysis.

Belongs to the protein kinase superfamily. Tyr protein kinase family. Insulin receptor subfamily. In terms of assembly, exists in a dynamic equilibrium between monomeric (low affinity) and dimeric (high affinity) structures. Binds SH2B2. Interacts with SQSTM1 and KIDINS220. Interacts with PTPRS. Interacts with MAPK8IP3/JIP3. Ligand-mediated auto-phosphorylation. In terms of tissue distribution, widely expressed but mainly in nervous tissue. Isoform 2 is expressed at higher levels in adult brain than in fetal brain.

It is found in the membrane. The catalysed reaction is L-tyrosyl-[protein] + ATP = O-phospho-L-tyrosyl-[protein] + ADP + H(+). Functionally, receptor tyrosine kinase involved in nervous system and probably heart development. Upon binding of its ligand NTF3/neurotrophin-3, NTRK3 autophosphorylates and activates different signaling pathways, including the phosphatidylinositol 3-kinase/AKT and the MAPK pathways, that control cell survival and differentiation. This Homo sapiens (Human) protein is NT-3 growth factor receptor (NTRK3).